We begin with the raw amino-acid sequence, 374 residues long: Probable ethanolamine kinase (374 aa).

Positions 93 and 252 each coordinate ATP.

The protein belongs to the choline/ethanolamine kinase family.

The enzyme catalyses ethanolamine + ATP = phosphoethanolamine + ADP + H(+). Its pathway is phospholipid metabolism; phosphatidylethanolamine biosynthesis; phosphatidylethanolamine from ethanolamine: step 1/3. Functionally, involved in phospholipid biosynthesis. Catalyzes the first step in phosphatidylethanolamine biosynthesis. In Arabidopsis thaliana (Mouse-ear cress), this protein is Probable ethanolamine kinase (EMB1187).